We begin with the raw amino-acid sequence, 272 residues long: Acetylglutamate kinase (272 aa).

Substrate is bound by residues 46-47 (GA), Arg-68, and Asn-166.

This sequence belongs to the acetylglutamate kinase family. ArgB subfamily.

The protein localises to the cytoplasm. The enzyme catalyses N-acetyl-L-glutamate + ATP = N-acetyl-L-glutamyl 5-phosphate + ADP. It functions in the pathway amino-acid biosynthesis; L-arginine biosynthesis; N(2)-acetyl-L-ornithine from L-glutamate: step 2/4. Catalyzes the ATP-dependent phosphorylation of N-acetyl-L-glutamate. The chain is Acetylglutamate kinase from Dehalococcoides mccartyi (strain CBDB1).